Consider the following 334-residue polypeptide: NAD-dependent protein deacylase sirtuin-6 (334 aa).

Ser2 carries the post-translational modification N-acetylserine. Ser10 is subject to Phosphoserine. In terms of domain architecture, Deacetylase sirtuin-type spans 27 to 272; the sequence is PEELERKVWE…CRLMKHLGLE (246 aa). N6-acetyllysine is present on Lys33. NAD(+) is bound by residues Ala53, Thr57, Phe64, Arg65, Trp71, Gln113, and His133. Catalysis depends on His133, which acts as the Proton acceptor. Zn(2+)-binding residues include Cys141, Cys144, and Cys166. A Glycyl lysine isopeptide (Lys-Gly) (interchain with G-Cter in ubiquitin) cross-link involves residue Lys170. Cys177 is a binding site for Zn(2+). NAD(+) is bound by residues Gly214, Ser216, Asn240, Gln242, and Val258. Positions 312 to 334 are disordered; sequence KSKPNSPILHRPPKRVKTEAAPS.

This sequence belongs to the sirtuin family. Class IV subfamily. In terms of assembly, homodimer; binds to nucleosomes and DNA ends as a homodimer. Interacts with RELA; interferes with RELA binding to target DNA. Interacts with SMARCA5; promoting recruitment of SMARCA5/SNF2H to double-strand breaks (DSBs) sites. Interacts with the mTORC2 complex; preventing the ability of SIRT6 to deacetylate FOXO1. Interacts with the CLOCK-BMAL1 complex; recruited by the CLOCK-BMAL1 complex to regulate expression of clock-controlled genes. Interacts with CSNK2A2; preventing CSNK2A2 localization to the nucleus. The cofactor is Zn(2+). Acetylated at Lys-33. Deacetylation at Lys-33 by SIRT1 promotes homomultimerization and binding to double-strand breaks (DSBs) sites. In terms of processing, phosphorylation at Ser-10 by MAPK8/JNK1 in response to oxidative stress stimulates the mono-ADP-ribosyltransferase activity on PARP1, leading to PARP1 recruitment to double-strand breaks (DSBs). Post-translationally, monoubiquitinated at Lys-170 by STUB1/CHIP, preventing its degradation by the proteasome. Sumoylated, leading to specifically decrease ability to deacetylate histone H3 at 'Lys-56' (H3K56ac). Highest levels are found in muscle, thymus, spleen, brain and heart (at protein level).

Its subcellular location is the nucleus. The protein resides in the chromosome. The protein localises to the telomere. It is found in the endoplasmic reticulum. It carries out the reaction N(6)-acetyl-L-lysyl-[protein] + NAD(+) + H2O = 2''-O-acetyl-ADP-D-ribose + nicotinamide + L-lysyl-[protein]. It catalyses the reaction N(6)-tetradecanoyl-L-lysyl-[protein] + NAD(+) + H2O = 2''-O-tetradecanoyl-ADP-D-ribose + nicotinamide + L-lysyl-[protein]. The catalysed reaction is N(6)-hexadecanoyl-L-lysyl-[protein] + NAD(+) + H2O = 2''-O-hexadecanoyl-ADP-D-ribose + nicotinamide + L-lysyl-[protein]. The enzyme catalyses L-lysyl-[protein] + NAD(+) = N(6)-(ADP-D-ribosyl)-L-lysyl-[protein] + nicotinamide + H(+). It carries out the reaction L-arginyl-[protein] + NAD(+) = N(omega)-(ADP-D-ribosyl)-L-arginyl-[protein] + nicotinamide + H(+). Its activity is regulated as follows. Compared to the defatty-acylase activity, the protein deacetylase activity is weak in vitro, and requires activation. The histone deacetylase activity is strongly activated upon binding to nucleosomes and chromatin in vivo. Two molecules of SIRT6 associate with the acidic patch of one nucleosome, while the C-terminal disordered region of SIRT6 associates with nucleosomal DNA, leading to efficient histone deacetylation. The protein-lysine deacetylase activity is also activated by long-chain free fatty-acids. Its function is as follows. NAD-dependent protein deacetylase, deacylase and mono-ADP-ribosyltransferase that plays an essential role in DNA damage repair, telomere maintenance, metabolic homeostasis, inflammation, tumorigenesis and aging. Displays protein-lysine deacetylase or defatty-acylase (demyristoylase and depalmitoylase) activity, depending on the context. Acts as a key histone deacetylase by catalyzing deacetylation of histone H3 at 'Lys-9', 'Lys-18' and 'Lys-56' (H3K9ac, H3K18ac and H3K56ac, respectively), suppressing target gene expression of several transcription factors, including NF-kappa-B. Acts as an inhibitor of transcription elongation by mediating deacetylation of H3K9ac and H3K56ac, preventing release of NELFE from chromatin and causing transcriptional pausing. Involved in DNA repair by promoting double-strand break (DSB) repair: acts as a DSB sensor by recognizing and binding DSB sites, leading to (1) recruitment of DNA repair proteins, such as SMARCA5/SNF2H, and (2) deacetylation of histone H3K9ac and H3K56ac. SIRT6 participation to DSB repair is probably involved in extension of life span. Also promotes DNA repair by deacetylating non-histone proteins, such as DDB2 and p53/TP53. Specifically deacetylates H3K18ac at pericentric heterochromatin, thereby maintaining pericentric heterochromatin silencing at centromeres and protecting against genomic instability and cellular senescence. Involved in telomere maintenance by catalyzing deacetylation of histone H3 in telomeric chromatin, regulating telomere position effect and telomere movement in response to DNA damage. Required for embryonic stem cell differentiation by mediating histone deacetylation of H3K9ac. Plays a major role in metabolism by regulating processes such as glycolysis, gluconeogenesis, insulin secretion and lipid metabolism. Inhibits glycolysis via histone deacetylase activity and by acting as a corepressor of the transcription factor HIF1A, thereby controlling the expression of multiple glycolytic genes. Has tumor suppressor activity by repressing glycolysis, thereby inhibiting the Warburg effect. Also regulates glycolysis and tumorigenesis by mediating deacetylation and nuclear export of non-histone proteins, such as isoform M2 of PKM (PKM2). Acts as a negative regulator of gluconeogenesis by mediating deacetylation of non-histone proteins, such as FOXO1 and KAT2A/GCN5. Promotes beta-oxidation of fatty acids during fasting by catalyzing deacetylation of NCOA2, inducing coactivation of PPARA. Acts as a regulator of lipid catabolism in brown adipocytes, both by catalyzing deacetylation of histones and non-histone proteins, such as FOXO1. Also acts as a regulator of circadian rhythms, both by regulating expression of clock-controlled genes involved in lipid and carbohydrate metabolism, and by catalyzing deacetylation of PER2. The defatty-acylase activity is specifically involved in regulation of protein secretion. Has high activity toward long-chain fatty acyl groups and mediates protein-lysine demyristoylation and depalmitoylation of target proteins, such as RRAS2 and TNF, thereby regulating their secretion. Also acts as a mono-ADP-ribosyltransferase by mediating mono-ADP-ribosylation of PARP1, TRIM28/KAP1 or SMARCC2/BAF170. Mono-ADP-ribosyltransferase activity is involved in DNA repair, cellular senescence, repression of LINE-1 retrotransposon elements and regulation of transcription. This chain is NAD-dependent protein deacylase sirtuin-6, found in Mus musculus (Mouse).